Here is a 284-residue protein sequence, read N- to C-terminus: Pantothenate synthetase (284 aa).

30 to 37 (MGNLHDGH) contributes to the ATP binding site. Catalysis depends on His-37, which acts as the Proton donor. Position 61 (Gln-61) interacts with (R)-pantoate. Residue Gln-61 participates in beta-alanine binding. Residue 149–152 (GEKD) participates in ATP binding. Gln-155 lines the (R)-pantoate pocket. ATP-binding positions include Val-178 and 186–189 (LSSR).

This sequence belongs to the pantothenate synthetase family. As to quaternary structure, homodimer.

Its subcellular location is the cytoplasm. The enzyme catalyses (R)-pantoate + beta-alanine + ATP = (R)-pantothenate + AMP + diphosphate + H(+). It functions in the pathway cofactor biosynthesis; (R)-pantothenate biosynthesis; (R)-pantothenate from (R)-pantoate and beta-alanine: step 1/1. Catalyzes the condensation of pantoate with beta-alanine in an ATP-dependent reaction via a pantoyl-adenylate intermediate. In Cronobacter sakazakii (strain ATCC BAA-894) (Enterobacter sakazakii), this protein is Pantothenate synthetase.